Consider the following 711-residue polypeptide: Polyribonucleotide nucleotidyltransferase (711 aa).

Residues aspartate 486 and aspartate 492 each contribute to the Mg(2+) site. Residues 553–612 enclose the KH domain; it reads PRIHTIKISTDKIKDVIGKGGSVIRALTEETGTTIEIEDDGTVKIAATDGEKAKYAIRRI. Residues 622–690 enclose the S1 motif domain; that stretch reads GRIYNGKVTR…RQGRVRLSIK (69 aa). A disordered region spans residues 690-711; that stretch reads KEATEQSQPAAAPEAPASEQAE. Over residues 694 to 711 the composition is skewed to low complexity; it reads EQSQPAAAPEAPASEQAE.

Belongs to the polyribonucleotide nucleotidyltransferase family. In terms of assembly, component of the RNA degradosome, which is a multiprotein complex involved in RNA processing and mRNA degradation. It depends on Mg(2+) as a cofactor.

It localises to the cytoplasm. The catalysed reaction is RNA(n+1) + phosphate = RNA(n) + a ribonucleoside 5'-diphosphate. Functionally, involved in mRNA degradation. Catalyzes the phosphorolysis of single-stranded polyribonucleotides processively in the 3'- to 5'-direction. This is Polyribonucleotide nucleotidyltransferase from Salmonella choleraesuis (strain SC-B67).